Reading from the N-terminus, the 282-residue chain is Putative 4-diphosphocytidyl-2-C-methyl-D-erythritol kinase (282 aa).

Lysine 9 is a catalytic residue. ATP is bound at residue 93–103 (PVSAGLAGGSA). Aspartate 135 is a catalytic residue.

It belongs to the GHMP kinase family. IspE subfamily.

The catalysed reaction is 4-CDP-2-C-methyl-D-erythritol + ATP = 4-CDP-2-C-methyl-D-erythritol 2-phosphate + ADP + H(+). Functionally, catalyzes the phosphorylation of the position 2 hydroxy group of 4-diphosphocytidyl-2C-methyl-D-erythritol. The sequence is that of Putative 4-diphosphocytidyl-2-C-methyl-D-erythritol kinase from Staphylococcus aureus (strain MRSA252).